A 129-amino-acid polypeptide reads, in one-letter code: UPF0344 protein MW0851 (129 aa).

The next 4 membrane-spanning stretches (helical) occupy residues 1 to 21 (MLHL…ATYL), 36 to 56 (LHMI…WILI), 67 to 87 (MLLT…EVSI), and 99 to 119 (MFWI…ILPL).

This sequence belongs to the UPF0344 family.

It localises to the cell membrane. The chain is UPF0344 protein MW0851 from Staphylococcus aureus (strain MW2).